Consider the following 274-residue polypeptide: Nitrogenase iron protein (274 aa).

Residue 8–15 participates in ATP binding; that stretch reads GKGGIGKS. Cys-94 lines the [4Fe-4S] cluster pocket. Residue Arg-97 is modified to ADP-ribosylarginine; by dinitrogenase reductase ADP-ribosyltransferase. Cys-131 serves as a coordination point for [4Fe-4S] cluster.

Belongs to the NifH/BchL/ChlL family. Homodimer. Requires [4Fe-4S] cluster as cofactor. In terms of processing, the reversible ADP-ribosylation of Arg-97 inactivates the nitrogenase reductase and regulates nitrogenase activity.

It catalyses the reaction N2 + 8 reduced [2Fe-2S]-[ferredoxin] + 16 ATP + 16 H2O = H2 + 8 oxidized [2Fe-2S]-[ferredoxin] + 2 NH4(+) + 16 ADP + 16 phosphate + 6 H(+). Its function is as follows. The key enzymatic reactions in nitrogen fixation are catalyzed by the nitrogenase complex, which has 2 components: the iron protein and the molybdenum-iron protein. This is Nitrogenase iron protein from Chlorobium phaeovibrioides (strain DSM 265 / 1930) (Prosthecochloris vibrioformis (strain DSM 265)).